We begin with the raw amino-acid sequence, 408 residues long: Arginine biosynthesis bifunctional protein ArgJ 1 (408 aa).

Residues Thr154, Lys180, Thr191, Glu277, Asn403, and Ser408 each coordinate substrate. The active-site Nucleophile is the Thr191.

The protein belongs to the ArgJ family. As to quaternary structure, heterotetramer of two alpha and two beta chains.

It is found in the cytoplasm. The enzyme catalyses N(2)-acetyl-L-ornithine + L-glutamate = N-acetyl-L-glutamate + L-ornithine. The catalysed reaction is L-glutamate + acetyl-CoA = N-acetyl-L-glutamate + CoA + H(+). The protein operates within amino-acid biosynthesis; L-arginine biosynthesis; L-ornithine and N-acetyl-L-glutamate from L-glutamate and N(2)-acetyl-L-ornithine (cyclic): step 1/1. It participates in amino-acid biosynthesis; L-arginine biosynthesis; N(2)-acetyl-L-ornithine from L-glutamate: step 1/4. Catalyzes two activities which are involved in the cyclic version of arginine biosynthesis: the synthesis of N-acetylglutamate from glutamate and acetyl-CoA as the acetyl donor, and of ornithine by transacetylation between N(2)-acetylornithine and glutamate. The chain is Arginine biosynthesis bifunctional protein ArgJ 1 from Clostridium acetobutylicum (strain ATCC 824 / DSM 792 / JCM 1419 / IAM 19013 / LMG 5710 / NBRC 13948 / NRRL B-527 / VKM B-1787 / 2291 / W).